Consider the following 492-residue polypeptide: Adenylyltransferase and sulfurtransferase uba4 (492 aa).

Residues G99, D120, 127 to 131 (SNLHR), K144, and 188 to 189 (DN) each bind ATP. Positions 237 and 240 each coordinate Zn(2+). The active-site Glycyl thioester intermediate; for adenylyltransferase activity is the C254. The Zn(2+) site is built by C317 and C320. The 113-residue stretch at 378 to 490 (GSKEPTIIDV…WREQIDPDWP (113 aa)) folds into the Rhodanese domain. Catalysis depends on C445, which acts as the Cysteine persulfide intermediate; for sulfurtransferase activity.

This sequence in the N-terminal section; belongs to the HesA/MoeB/ThiF family. UBA4 subfamily. Requires Zn(2+) as cofactor.

The protein resides in the cytoplasm. The protein localises to the cytosol. The catalysed reaction is [molybdopterin-synthase sulfur-carrier protein]-C-terminal Gly-Gly + ATP + H(+) = [molybdopterin-synthase sulfur-carrier protein]-C-terminal Gly-Gly-AMP + diphosphate. It carries out the reaction [molybdopterin-synthase sulfur-carrier protein]-C-terminal Gly-Gly-AMP + S-sulfanyl-L-cysteinyl-[cysteine desulfurase] + AH2 = [molybdopterin-synthase sulfur-carrier protein]-C-terminal-Gly-aminoethanethioate + L-cysteinyl-[cysteine desulfurase] + A + AMP + 2 H(+). It functions in the pathway tRNA modification; 5-methoxycarbonylmethyl-2-thiouridine-tRNA biosynthesis. Its pathway is cofactor biosynthesis; molybdopterin biosynthesis. Functionally, plays a central role in 2-thiolation of mcm(5)S(2)U at tRNA wobble positions of cytosolic tRNA(Lys), tRNA(Glu) and tRNA(Gln). Also essential during biosynthesis of the molybdenum cofactor. Acts by mediating the C-terminal thiocarboxylation of sulfur carriers urm1 and mocs2a. Its N-terminus first activates urm1 and mocs2a as acyl-adenylates (-COAMP), then the persulfide sulfur on the catalytic cysteine is transferred to urm1 and mocs2a to form thiocarboxylation (-COSH) of their C-terminus. The reaction probably involves hydrogen sulfide that is generated from the persulfide intermediate and that acts as a nucleophile towards urm1 and mocs2a. Subsequently, a transient disulfide bond is formed. Does not use thiosulfate as sulfur donor; nfs1 probably acting as a sulfur donor for thiocarboxylation reactions. The polypeptide is Adenylyltransferase and sulfurtransferase uba4 (Aspergillus clavatus (strain ATCC 1007 / CBS 513.65 / DSM 816 / NCTC 3887 / NRRL 1 / QM 1276 / 107)).